The chain runs to 105 residues: Cytochrome c-553-like (105 aa).

The signal sequence occupies residues 1 to 29 (MAGIVSLVILAVALFSFMNFDPYVSQVLA). Residues C45, C48, H49, and M85 each coordinate heme c.

In terms of processing, binds 1 heme c group covalently per subunit.

This chain is Cytochrome c-553-like (cytM), found in Synechocystis sp. (strain ATCC 27184 / PCC 6803 / Kazusa).